The chain runs to 599 residues: Nucleosomal histone kinase 1 (599 aa).

The Protein kinase domain occupies 47-328; the sequence is WRIGPSIGVG…PDYDKCRSWF (282 aa). ATP contacts are provided by residues 53 to 61 and Lys77; that span reads IGVGGFGEI. Asp183 (proton acceptor) is an active-site residue. Disordered stretches follow at residues 340-507 and 532-599; these read NGDL…PQPR and RKKK…KYQG. Polar residues predominate over residues 349 to 361; sequence PQTSSNNNLSPPG. 5 positions are modified to phosphoserine: Ser376, Ser381, Ser382, Ser388, and Ser390. The segment covering 435 to 448 has biased composition (basic and acidic residues); that stretch reads VKTEPKSTPRERAT. Ser483 bears the Phosphoserine mark. Over residues 546–558 the composition is skewed to low complexity; it reads SRTPSSRSALASS. Ser564 and Ser586 each carry phosphoserine. Residue Thr589 is modified to Phosphothreonine.

It belongs to the protein kinase superfamily. CK1 Ser/Thr protein kinase family. VRK subfamily. May interact with Unc-89 (via protein kinase domain 1). Interacts with L(2)gl. The cofactor is Mg(2+). In terms of processing, phosphorylated during mitosis and female meiosis. As to expression, expressed in ovaries (at protein level). Expressed in indirect flight muscle (IFM) (at protein level).

It localises to the cytoplasm. It is found in the nucleus. Its subcellular location is the chromosome. The protein localises to the myofibril. The protein resides in the sarcomere. It localises to the z line. It is found in the m line. The catalysed reaction is L-seryl-[protein] + ATP = O-phospho-L-seryl-[protein] + ADP + H(+). It carries out the reaction L-threonyl-[protein] + ATP = O-phospho-L-threonyl-[protein] + ADP + H(+). Its function is as follows. Serine/threonine-protein kinase involved in somatic mitosis and female meiosis. Required for spindle organization in mitosis, and for the establishment or maintenance of meiosis-specific chromosomal configurations, including the prophase I karyosome and the metaphase I spindle. Specifically phosphorylates nucleosomal H2A on 'Thr-119'. Required for the development and organization of indirect flight muscle sarcomeres by regulating the formation of M line and H zone and the correct assembly of thick and thin filaments in the sarcomere. In Drosophila melanogaster (Fruit fly), this protein is Nucleosomal histone kinase 1 (ball).